A 699-amino-acid polypeptide reads, in one-letter code: SPX domain-containing membrane protein At4g22990 (699 aa).

The SPX domain maps to 2–145 (VAFGKKLKER…GYRFTNYYVK (144 aa)). 6 helical membrane passes run 249 to 269 (FMSL…TYII), 280 to 300 (LGAA…AQLF), 317 to 337 (LIFS…AFDF), 339 to 358 (SIAV…ARAV), 377 to 397 (AGFV…AGLL), and 413 to 433 (LPGW…AISF). Residues 475-490 (IEEQGEDECDGSEEAS) are compositionally biased toward acidic residues. The interval 475–494 (IEEQGEDECDGSEEASEDSR) is disordered. 5 helical membrane-spanning segments follow: residues 515-535 (LLIY…SSVI), 546-566 (SVAI…LVVG), 578-598 (ILLV…HVVV), 606-626 (VCSG…NLSL), and 671-691 (MLLN…IVAT).

Belongs to the major facilitator superfamily.

Its subcellular location is the membrane. The chain is SPX domain-containing membrane protein At4g22990 from Arabidopsis thaliana (Mouse-ear cress).